A 270-amino-acid chain; its full sequence is Acyl-[acyl-carrier-protein]--UDP-N-acetylglucosamine O-acyltransferase (270 aa).

The protein belongs to the transferase hexapeptide repeat family. LpxA subfamily. As to quaternary structure, homotrimer.

It localises to the cytoplasm. It catalyses the reaction a (3R)-hydroxyacyl-[ACP] + UDP-N-acetyl-alpha-D-glucosamine = a UDP-3-O-[(3R)-3-hydroxyacyl]-N-acetyl-alpha-D-glucosamine + holo-[ACP]. It functions in the pathway glycolipid biosynthesis; lipid IV(A) biosynthesis; lipid IV(A) from (3R)-3-hydroxytetradecanoyl-[acyl-carrier-protein] and UDP-N-acetyl-alpha-D-glucosamine: step 1/6. Functionally, involved in the biosynthesis of lipid A, a phosphorylated glycolipid that anchors the lipopolysaccharide to the outer membrane of the cell. This Helicobacter pylori (strain G27) protein is Acyl-[acyl-carrier-protein]--UDP-N-acetylglucosamine O-acyltransferase.